The sequence spans 139 residues: ATP synthase epsilon chain (139 aa).

The protein belongs to the ATPase epsilon chain family. F-type ATPases have 2 components, CF(1) - the catalytic core - and CF(0) - the membrane proton channel. CF(1) has five subunits: alpha(3), beta(3), gamma(1), delta(1), epsilon(1). CF(0) has three main subunits: a, b and c.

It is found in the cell membrane. Functionally, produces ATP from ADP in the presence of a proton gradient across the membrane. The polypeptide is ATP synthase epsilon chain (Levilactobacillus brevis (strain ATCC 367 / BCRC 12310 / CIP 105137 / JCM 1170 / LMG 11437 / NCIMB 947 / NCTC 947) (Lactobacillus brevis)).